Reading from the N-terminus, the 815-residue chain is MASIAHLVVSGLLAATAVNGQNYGGSGRSDDAFSYVQPRNTTILGQYGHSPAVLPSPNATGAGGWEEALAKAQQFVAQLTLEEKADMVTGQPGPCVGNIVAIPRLGFKGLCLQDGPLAIRVADYASVFSAGVTAASTWDKDILYERGVAMGEEFKGKGAHVALGPVAGPLGRSGYGGRNWEGFAADPYLTGVAMERTIQGYQDAGVQACAKHFIGNEQETQRNPNYNPNGTLTDVIQEAISSNIDDRTIHELYLWPFANAARAKVASVMCSYQRLNGSYACQNSKVLNGLLKEELGFQGYVQSDWGGTHSGVSSIEGGLDMNMPGGLGQYGQTPEAGSFFGKNVTFAVNNGTVDISRVDDMIVRIMTPYYWLGQDQGYPEIDPSSADLNTFSPRSTWLREFNLTGERSRDVRGDHGELIRRHGAEATILLKNENKALPLKAPKSIAVFGNDAGDTTEGAVNKATFEFGTLAAGGGSGTGRFTYLVTPLEALKARGKQDNTLVQWWLNNTLIADSDVTSLWVPTPPDACLVFLKTWAEEGSDREYLSVDWNGNEVVDSVASKCNNTIVVTHSSGINELPFANHPNVTAIVAAHYPGQESGNSIVDILYGDVNPSGKLPYTIAKNGSDYNAPPTTAVETTGADDWQAWFDEKLEIDYRYFDAHNISVLYEFGFGLSYTTFSLSDIKTEPLAESISSVPEQLPIQPGGNPALWESVYNVSVTVTNTGDVKGATVPQLYVTFPDSAPAGTPPKQLRGFDKVSLAPGESQTVGFELMRRDLSYWDVVSQEWLIPEGEFTIRVGFSSRDLSQETKITPVTA.

The signal sequence occupies residues 1–20 (MASIAHLVVSGLLAATAVNG). N-linked (GlcNAc...) asparagine glycosylation is found at Asn40, Asn58, Asn229, and Asn276. Residue Asp304 is part of the active site. Residues Asn343, Asn350, Asn402, Asn507, Asn563, Asn584, Asn623, Asn662, and Asn715 are each glycosylated (N-linked (GlcNAc...) asparagine).

It belongs to the glycosyl hydrolase 3 family.

It localises to the secreted. It carries out the reaction Hydrolysis of terminal, non-reducing beta-D-glucosyl residues with release of beta-D-glucose.. The protein operates within glycan metabolism; cellulose degradation. Its function is as follows. Beta-glucosidases are one of a number of cellulolytic enzymes involved in the degradation of cellulosic biomass. Catalyzes the last step releasing glucose from the inhibitory cellobiose. This Aspergillus flavus (strain ATCC 200026 / FGSC A1120 / IAM 13836 / NRRL 3357 / JCM 12722 / SRRC 167) protein is Probable beta-glucosidase G (bglG).